The sequence spans 414 residues: Lysocardiolipin acyltransferase 1 (414 aa).

2 helical membrane passes run 47-67 and 86-106; these read FILT…SPFL and ATWL…KVII. The short motif at 123–128 is the HXXXXD motif element; it reads HRTRMD. The residue at position 221 (Lys-221) is an N6-acetyllysine. The next 2 helical transmembrane spans lie at 340–360 and 362–382; these read LRVL…SPAM and LLIY…VIFV.

It belongs to the 1-acyl-sn-glycerol-3-phosphate acyltransferase family. Expressed at higher level in heart, kidney and pancreas than in brain, spleen, liver, lung, small intestine and placenta.

Its subcellular location is the endoplasmic reticulum membrane. The catalysed reaction is a 1-acyl-sn-glycero-3-phosphate + an acyl-CoA = a 1,2-diacyl-sn-glycero-3-phosphate + CoA. The enzyme catalyses a 1-acyl-sn-glycero-3-phospho-(1D-myo-inositol) + an acyl-CoA = a 1,2-diacyl-sn-glycero-3-phospho-(1D-myo-inositol) + CoA. It carries out the reaction 1-acyl-sn-glycero-3-phospho-(1'-sn-glycerol) + an acyl-CoA = a 1,2-diacyl-sn-glycero-3-phospho-(1'-sn-glycerol) + CoA. It catalyses the reaction 1-hexadecanoyl-sn-glycero-3-phosphate + (9Z)-octadecenoyl-CoA = 1-hexadecanoyl-2-(9Z-octadecenoyl)-sn-glycero-3-phosphate + CoA. The catalysed reaction is 1-(9Z-octadecenoyl)-sn-glycero-3-phosphate + (9Z)-octadecenoyl-CoA = 1,2-di-(9Z-octadecenoyl)-sn-glycero-3-phosphate + CoA. The enzyme catalyses 1-(9Z,12Z)-octadecadienoyl-sn-glycero-3-phosphate + (9Z)-octadecenoyl-CoA = 1-(9Z,12Z)-octadecadienoyl-2-(9Z)-octadecenoyl-sn-glycero-3-phosphate + CoA. It carries out the reaction 1-(9Z,12Z,15Z)-octadecatrienoyl-sn-glycero-3-phosphate + (9Z)-octadecenoyl-CoA = 1-(9Z,12Z,15Z)-octadecatrienoyl-2-(9Z)-octadecenoyl-sn-glycero-3-phosphate + CoA. It catalyses the reaction 1-(9Z-octadecenoyl)-sn-glycero-3-phosphate + hexadecanoyl-CoA = 1-(9Z)-octadecenoyl-2-hexadecanoyl-sn-glycero-3-phosphate + CoA. The catalysed reaction is 1-(9Z-octadecenoyl)-sn-glycero-3-phosphate + octadecanoyl-CoA = 1-(9Z-octadecenoyl)-2-octadecanoyl-sn-glycero-3-phosphate + CoA. The enzyme catalyses 1-acyl-sn-glycero-3-phospho-(1'-sn-glycerol) + (9Z)-octadecenoyl-CoA = 1-acyl-2-(9Z-octadecenoyl)-sn-glycero-3-phospho-(1'-sn-glycerol) + CoA. It carries out the reaction a 1-acyl-sn-glycero-3-phospho-(1D-myo-inositol) + (9Z)-octadecenoyl-CoA = a 1-acyl-2-(9Z-octadecenoyl)-sn-glycero-3-phospho-(1D-myo-inositol) + CoA. It catalyses the reaction 1-hexadecanoyl-sn-glycero-3-phospho-(1D-myo-inositol) + hexadecanoyl-CoA = 1,2-dihexadecanoyl-sn-glycero-3-phospho-(1D-myo-inositol) + CoA. The catalysed reaction is 1-hexadecanoyl-sn-glycero-3-phospho-(1D-myo-inositol) + octadecanoyl-CoA = 1-hexadecanoyl-2-octadecanoyl-sn-glycero-3-phospho-(1D-myo-inositol) + CoA. The enzyme catalyses 1-hexadecanoyl-sn-glycero-3-phospho-(1D-myo-inositol) + (9Z)-octadecenoyl-CoA = 1-hexadecanoyl-2-(9Z-octadecenoyl)-sn-glycero-3-phospho-(1D-myo-inositol) + CoA. It carries out the reaction 1-hexadecanoyl-sn-glycero-3-phospho-(1D-myo-inositol) + (9Z,12Z)-octadecadienoyl-CoA = 1-hexadecanoyl-2-(9Z,12Z-octadecadienoyl)-sn-glycero-3-phospho-(1D-myo-inositol) + CoA. It catalyses the reaction 1-hexadecanoyl-sn-glycero-3-phospho-(1D-myo-inositol) + (5Z,8Z,11Z,14Z)-eicosatetraenoyl-CoA = 1-hexadecanoyl-2-(5Z,8Z,11Z,14Z-eicosatetraenoyl)-sn-glycero-3-phospho-D-myo-inositol + CoA. The catalysed reaction is 1-hexadecanoyl-sn-glycero-3-phospho-(1'-sn-glycerol) + hexadecanoyl-CoA = 1,2-dihexadecanoyl-sn-glycero-3-phospho-(1'-sn-glycerol) + CoA. The enzyme catalyses 1-hexadecanoyl-sn-glycero-3-phospho-(1'-sn-glycerol) + octadecanoyl-CoA = 1-hexadecanoyl-2-octadecanoyl-sn-glycero-3-phospho-(1'-sn-glycerol) + CoA. It carries out the reaction 1-hexadecanoyl-sn-glycero-3-phospho-(1'-sn-glycerol) + (9Z)-octadecenoyl-CoA = 1-hexadecanoyl-2-(9Z-octadecenoyl)-sn-glycero-3-phospho-(1'-sn-glycerol) + CoA. It catalyses the reaction 1-hexadecanoyl-sn-glycero-3-phospho-(1'-sn-glycerol) + (9Z,12Z)-octadecadienoyl-CoA = 1-hexadecanoyl-2-(9Z,12Z-octadecadienoyl)-sn-glycero-3-phospho-(1'-sn-glycerol) + CoA. The catalysed reaction is 1-tetradecanoyl-sn-glycero-3-phospho-(1'-sn-glycerol) + (9Z)-octadecenoyl-CoA = 1-tetradecanoyl-2-(9Z-octadecenoyl)-sn-glycero-3-phospho-(1'-sn-glycerol) + CoA. The enzyme catalyses 1-octadecanoyl-sn-glycero-3-phospho-(1'-sn-glycerol) + (9Z)-octadecenoyl-CoA = 1-octadecanoyl-2-(9Z-octadecenoyl)-sn-glycero-3-phospho-(1'-sn-glycerol) + CoA. It carries out the reaction 1-(9Z-octadecenoyl)-sn-glycero-3-phospho-(1'-sn-glycerol) + (9Z)-octadecenoyl-CoA = 1,2-di-(9Z-octadecenoyl)-sn-glycero-3-phospho-(1'-sn-glycerol) + CoA. It catalyses the reaction 1-hexadecanoyl-sn-glycero-3-phospho-(1D-myo-inositol) + dodecanoyl-CoA = 1-hexadecanoyl-2-dodecanoyl-sn-glycero-3-phospho-(1D-myo-inositol) + CoA. The catalysed reaction is 1',3'-bis-[1-acyl-sn-glycero-3-phospho]-glycerol + (9Z)-octadecenoyl-CoA = 1'-[1-acyl-2-(9Z)-octadecenoyl-sn-glycero-3-phospho],3'-[1-acyl,2-hydroxy-sn-glycero-3-phospho]-glycerol + CoA. The enzyme catalyses 1'-[1,2-diacyl-sn-glycero-3-phospho],3'-[1-acyl-sn-glycero-3-phospho]-glycerol + (9Z)-octadecenoyl-CoA = 1'-[1,2-diacyl-sn-glycero-3-phospho],3'-[1-acyl,2-(9Z)-octadecenoyl-sn-glycero-3-phospho]-glycerol + CoA. It carries out the reaction 1'-[1,2-diacyl-sn-glycero-3-phospho],3'-[1-acyl-sn-glycero-3-phospho]-glycerol + (9Z,12Z)-octadecadienoyl-CoA = 1'-[1,2-diacyl-sn-glycero-3-phospho],3'-[1-acyl,2-(9Z,12Z)-octadecadienoyl-sn-glycero-3-phospho]-glycerol + CoA. It catalyses the reaction 1'-[1,2-diacyl-sn-glycero-3-phospho],3'-[1-acyl-sn-glycero-3-phospho]-glycerol + dodecanoyl-CoA = 1'-[1,2-diacyl-sn-glycero-3-phospho],3'-[1-acyl,2-dodecanoyl-sn-glycero-3-phospho]-glycerol + CoA. The catalysed reaction is 1',3'-bis-[1-acyl-sn-glycero-3-phospho]-glycerol + dodecanoyl-CoA = 1'-[1-acyl-2-dodecanoyl-sn-glycero-3-phospho],3'-[1-acyl,2-hydroxy-sn-glycero-3-phospho]-glycerol + CoA. The enzyme catalyses a 1-acyl-sn-glycero-3-phosphate + (9Z)-octadecenoyl-CoA = a 1-acyl-2-(9Z-octadecenoyl)-sn-glycero-3-phosphate + CoA. It carries out the reaction 1',3'-bis-[1-acyl-sn-glycero-3-phospho]-glycerol + (9Z,12Z)-octadecadienoyl-CoA = 1'-[1-acyl-2-(9Z,12Z)-octadecadienoyl-sn-glycero-3-phospho],3'-[1-acyl,2-hydroxy-sn-glycero-3-phospho]-glycerol + CoA. It catalyses the reaction 1',3'-bis-[1-acyl-sn-glycero-3-phospho]-glycerol + hexadecanoyl-CoA = 1'-[1-acyl-2-hexadecanoyl-sn-glycero-3-phospho],3'-[1-acyl,2-hydroxy-sn-glycero-3-phospho]-glycerol + CoA. The catalysed reaction is 1',3'-bis-[1-acyl-sn-glycero-3-phospho]-glycerol + octadecanoyl-CoA = 1'-[1-acyl-2-octadecanoyl-sn-glycero-3-phospho],3'-[1-acyl,2-hydroxy-sn-glycero-3-phospho]-glycerol + CoA. The enzyme catalyses 1'-[1,2-diacyl-sn-glycero-3-phospho],3'-[1-acyl-sn-glycero-3-phospho]-glycerol + octanoyl-CoA = 1'-[1,2-diacyl-sn-glycero-3-phospho],3'-[1-acyl,2-octanoyl-sn-glycero-3-phospho]-glycerol + CoA. It carries out the reaction 1',3'-bis-[1-acyl-sn-glycero-3-phospho]-glycerol + octanoyl-CoA = 1'-[1-acyl-2-octanoyl-sn-glycero-3-phospho],3'-[1-acyl,2-hydroxy-sn-glycero-3-phospho]-glycerol + CoA. It catalyses the reaction 1'-[1,2-diacyl-sn-glycero-3-phospho],3'-[1-acyl-sn-glycero-3-phospho]-glycerol + hexadecanoyl-CoA = 1'-[1,2-diacyl-sn-glycero-3-phospho],3'-[1-acyl,2-hexadecanoyl-sn-glycero-3-phospho]-glycerol + CoA. The catalysed reaction is 1'-[1,2-diacyl-sn-glycero-3-phospho],3'-[1-acyl-sn-glycero-3-phospho]-glycerol + (5Z,8Z,11Z,14Z)-eicosatetraenoyl-CoA = 1'-[1,2-diacyl-sn-glycero-3-phospho],3'-[1-acyl,2-(5Z,8Z,11Z,14Z)-eicosatetraenoyl-sn-glycero-3-phospho]-glycerol + CoA. The enzyme catalyses 1',3'-bis-[1-acyl-sn-glycero-3-phospho]-glycerol + (5Z,8Z,11Z,14Z)-eicosatetraenoyl-CoA = 1'-[1-acyl-2-(5Z,8Z,11Z,14Z)-eicosatetraenoyl-sn-glycero-3-phospho],3'-[1-acyl,2-hydroxy-sn-glycero-3-phospho]-glycerol + CoA. It carries out the reaction a 1-acyl-sn-glycero-3-phospho-(1D-myo-inositol) + octadecanoyl-CoA = a 1-acyl-2-octadecanoyl-sn-glycero-3-phospho-(1D-myo-inositol) + CoA. It catalyses the reaction a 2-acyl-sn-glycero-3-phospho-D-myo-inositol + octadecanoyl-CoA = 1-octadecanoyl-2-acyl-sn-glycero-3-phospho-1D-myo-inositol + CoA. Its pathway is phospholipid metabolism; CDP-diacylglycerol biosynthesis; CDP-diacylglycerol from sn-glycerol 3-phosphate: step 2/3. Exhibits acyl-CoA:lysocardiolipin acyltransferase (ALCAT) activity; catalyzes the reacylation of lyso-cardiolipin to cardiolipin (CL), a key step in CL remodeling. Recognizes both monolysocardiolipin and dilysocardiolipin as substrates with a preference for linoleoyl-CoA and oleoyl-CoA as acyl donors. Also exhibits 1-acyl-sn-glycerol-3-phosphate acyltransferase activity (AGPAT) activity; converts 1-acyl-sn-glycerol-3- phosphate (lysophosphatidic acid or LPA) into 1,2-diacyl-sn-glycerol-3- phosphate (phosphatidic acid or PA) by incorporating an acyl moiety at the sn-2 position of the glycerol backbone. Possesses both lysophosphatidylinositol acyltransferase (LPIAT) and lysophosphatidylglycerol acyltransferase (LPGAT) activities. Required for establishment of the hematopoietic and endothelial lineages. This Homo sapiens (Human) protein is Lysocardiolipin acyltransferase 1 (LCLAT1).